We begin with the raw amino-acid sequence, 251 residues long: Chromobox protein homolog 7 (251 aa).

Positions 11–69 (FAVESIRKKRVRKGKVEYLVKWKGWPPKYSTWEPEEHILDPRLVMAYEEKEERDRASGY) constitute a Chromo domain. Residues 190–220 (EPAAQPPEEEADADLAEGPPPWTPALPSSEV) are disordered. The tract at residues 223–236 (TDITANSITVTFRE) is required for cellular lifespan extension.

As to quaternary structure, component of a PRC1-like complex. Interacts with RING1 and RNF2/RING1B, but not with BMI1, EED or EZH2. Interacts with PCGF1, PCGF2, PCGF3, PCGF5 and PCGF6.

It is found in the nucleus. Functionally, component of a Polycomb group (PcG) multiprotein PRC1-like complex, a complex class required to maintain the transcriptionally repressive state of many genes, including Hox genes, throughout development. PcG PRC1 complex acts via chromatin remodeling and modification of histones; it mediates monoubiquitination of histone H2A 'Lys-119', rendering chromatin heritably changed in its expressibility. Promotes histone H3 trimethylation at 'Lys-9' (H3K9me3). Binds to trimethylated lysine residues in histones, and possibly also other proteins. Regulator of cellular lifespan by maintaining the repression of CDKN2A, but not by inducing telomerase activity. This is Chromobox protein homolog 7 (CBX7) from Homo sapiens (Human).